The following is a 977-amino-acid chain: Receptor-like protein kinase 7 (977 aa).

An N-terminal signal peptide occupies residues 1-28 (MAPSLRNFNFFHRFSTFLVFSLFSVVSS). Residues 29–608 (DDLQVLLKLK…NPSRSHGDTR (580 aa)) are Extracellular-facing. LRR repeat units lie at residues 71–95 (RGNVTEIDLSRRGLSGNFPFDSVCE), 96–119 (IQSLEKLSLGFNSLSGIIPSDLKN), and 121–145 (TSLKYLDLGNNLFSGAFPEFSSLNQ). Asn73 and Asn119 each carry an N-linked (GlcNAc...) asparagine glycan. N-linked (GlcNAc...) asparagine glycans are attached at residues Asn152 and Asn167. LRR repeat units follow at residues 168–194 (ATSLVVLSLGDNPFDATADFPVEVVSL), 195–218 (KKLSWLYLSNCSIAGKIPPAIGDL), 219–242 (TELRNLEISDSGLTGEIPSEISKL), 244–265 (NLWQLELYNNSLTGKLPTGFGN), 267–289 (KNLTYLDASTNLLQGDLSELRSL), 290–312 (TNLVSLQMFENEFSGEIPLEFGE), 313–337 (FKDLVNLSLYTNKLTGSLPQGLGSL), 339–361 (DFDFIDASENLLTGPIPPDMCKN), 362–385 (GKMKALLLLQNNLTGSIPESYANC), 386–409 (LTLQRFRVSENNLNGTVPAGLWGL), 411–433 (KLEIIDIEMNNFEGPITADIKNG), 434–457 (KMLGALYLGFNKLSDELPEEIGDT), 458–481 (ESLTKVELNNNRFTGKIPSSIGKL), 482–505 (KGLSSLKMQSNGFSGEIPDSIGSC), 507–529 (MLSDVNMAQNSISGEIPHTLGSL), 530–553 (PTLNALNLSDNKLSGRIPESLSSL), and 555–578 (LSLLDLSNNRLSGRIPLSLSSYNG). An N-linked (GlcNAc...) asparagine glycan is attached at Asn204. Residues Asn252 and Asn268 are each glycosylated (N-linked (GlcNAc...) asparagine). An N-linked (GlcNAc...) asparagine glycan is attached at Asn318. N-linked (GlcNAc...) asparagine glycans are attached at residues Asn373 and Asn399. Residues Asn536 and Asn577 are each glycosylated (N-linked (GlcNAc...) asparagine). A helical membrane pass occupies residues 609 to 629 (VFVLCIVFGLLILLASLVFFL). Topologically, residues 630 to 977 (YLKKTEKKEG…ESDVKVKEIS (348 aa)) are cytoplasmic. The 294-residue stretch at 666 to 959 (IKEENLIGRG…QMIEDAEPCR (294 aa)) folds into the Protein kinase domain. ATP-binding positions include 672-680 (IGRGGCGDV) and Lys694. The active-site Proton acceptor is Asp805.

It belongs to the protein kinase superfamily. Ser/Thr protein kinase family. Interacts with PIP1. As to expression, expressed in roots, stems and dry seeds. Expressed at junctions between organs, such as the insertion zones of stamens, petals and sepals, the transition zones of floral stem and pedicel, pedicel and silique, and floral stem and cauline leaves.

It localises to the membrane. It catalyses the reaction L-seryl-[protein] + ATP = O-phospho-L-seryl-[protein] + ADP + H(+). The catalysed reaction is L-threonyl-[protein] + ATP = O-phospho-L-threonyl-[protein] + ADP + H(+). In terms of biological role, plays a role in pattern-triggered immunity (PTI) signaling induced by pathogen-associated molecular patterns (PAMPs). Acts as a receptor for PIP1 defense peptide. PIP1 is an endogenous secreted peptide that acts as elicitor of immune response and positive regulator of defense response. Involved in the control of seed germination speed, in tolerance to oxidative stress and in maintaining seed longevity. The sequence is that of Receptor-like protein kinase 7 from Arabidopsis thaliana (Mouse-ear cress).